The primary structure comprises 533 residues: Neuropilin and tolloid-like protein 1 (533 aa).

Positions 1-22 (MIYGRSLFHIIASLIILHSSGA) are cleaved as a signal peptide. The Extracellular portion of the chain corresponds to 23–344 (TKKGTEKQIT…LDQLTNTSGT (322 aa)). 7 disulfides stabilise this stretch: C41–C68, C96–C118, C172–C202, C229–C251, C292–C304, C299–C317, and C311–C326. 2 consecutive CUB domains span residues 41 to 155 (CGTW…YNFT) and 172 to 287 (CEFE…FTSF). An LDL-receptor class A domain is found at 291–327 (PCEGNTFFCHSNMCINNTLVCNGLQNCVYPWDENHCK). N-linked (GlcNAc...) asparagine glycosylation is present at N306. The N-linked (GlcNAc...) asparagine glycan is linked to N340. Residues 345–365 (VIGVTSCIVIILIIVSVIVQI) form a helical membrane-spanning segment. Residues 366 to 533 (KQPRKKYVQR…HESEYNTTRV (168 aa)) are Cytoplasmic-facing. A Phosphotyrosine modification is found at Y417. The PDZ-binding motif lies at 531–533 (TRV).

Interacts with PLZ domains of DLG2, DLG3 and DLG4 via its C-terminal TRV domain. Interacts with GRIN2A and GRIN2B via its CUB domains. In terms of tissue distribution, expressed only in brain. Present throughout the central nervous system. Highly expressed in the hippocampal CA3 region, olfactory bulb and tubercle, caudate putamen, and neocortex in the adult brain.

Its subcellular location is the membrane. It localises to the postsynaptic density membrane. In terms of biological role, involved in the development and/or maintenance of neuronal circuitry. Accessory subunit of the neuronal N-methyl-D-aspartate receptor (NMDAR) critical for maintaining the abundance of GRIN2A-containing NMDARs in the postsynaptic density. Regulates long-term NMDA receptor-dependent synaptic plasticity and cognition, at least in the context of spatial learning and memory. This is Neuropilin and tolloid-like protein 1 (Neto1) from Mus musculus (Mouse).